A 554-amino-acid chain; its full sequence is MLO-like protein 14 (554 aa).

Residues 1–13 (MREETEPSERTLG) lie on the Extracellular side of the membrane. Residues 14–34 (LTPTWSVATVLTIFVFVSLIV) traverse the membrane as a helical segment. At 35-63 (ERSIHRLSNWLQKTKRKPLFAALEKMKEE) the chain is on the cytoplasmic side. Residues 64–84 (LMLLGFISLLLTATSSTIANI) form a helical membrane-spanning segment. Residues 85–158 (CVSSSFHNDR…SYEGMEQLHR (74 aa)) are Extracellular-facing. The chain crosses the membrane as a helical span at residues 159-179 (FIFIMAVTHVTYSCLTMLLAI). Over 180–281 (VKIHRWRIWE…MIRSMEEEFQ (102 aa)) the chain is Cytoplasmic. The chain crosses the membrane as a helical span at residues 282-302 (KIVGVSGPLWGFVVGFMLFNI). K303 is a topological domain (extracellular). A helical transmembrane segment spans residues 304–324 (GSNLYFWLAIIPITLVLLVGA). Residues 325 to 366 (KLQHVIATLALENASITEYASGIKLRPRDELFWFKKPELLLS) are Cytoplasmic-facing. The helical transmembrane segment at 367 to 387 (LIHFIQFQNAFELASFFWFWW) threads the bilayer. Residues 388–406 (QFGYNSCFLRNHLLVYLRL) lie on the Extracellular side of the membrane. The chain crosses the membrane as a helical span at residues 407–427 (ILGFSGQFLCSYSTLPLYALV). Residues 428-554 (TQMGTNYKAA…SSSLPMRREC (127 aa)) are Cytoplasmic-facing. The calmodulin-binding stretch occupies residues 441 to 462 (QRVRETINGWGKATRRKRRHGL).

This sequence belongs to the MLO family.

The protein localises to the membrane. May be involved in modulation of pathogen defense and leaf cell death. Activity seems to be regulated by Ca(2+)-dependent calmodulin binding and seems not to require heterotrimeric G proteins. The sequence is that of MLO-like protein 14 (MLO14) from Arabidopsis thaliana (Mouse-ear cress).